The following is a 457-amino-acid chain: Bifunctional protein GlmU (457 aa).

Residues 1–229 form a pyrophosphorylase region; it reads MYNCAIILAA…YEEIMGVNSR (229 aa). Residues 8-11, K22, Q73, and 78-79 contribute to the UDP-N-acetyl-alpha-D-glucosamine site; these read LAAG and GT. D103 provides a ligand contact to Mg(2+). Residues G140, E155, N170, and N227 each contribute to the UDP-N-acetyl-alpha-D-glucosamine site. Mg(2+) is bound at residue N227. Positions 230–250 are linker; that stretch reads VQLSEAEIVMRKRINHKHMVN. The N-acetyltransferase stretch occupies residues 251–457; that stretch reads GVTFIDCEST…WLDKKGLLKK (207 aa). 2 residues coordinate UDP-N-acetyl-alpha-D-glucosamine: R332 and K350. H362 functions as the Proton acceptor in the catalytic mechanism. Residues Y365 and N376 each coordinate UDP-N-acetyl-alpha-D-glucosamine. Residues 385-386, A422, and R439 each bind acetyl-CoA; that span reads NY.

In the N-terminal section; belongs to the N-acetylglucosamine-1-phosphate uridyltransferase family. This sequence in the C-terminal section; belongs to the transferase hexapeptide repeat family. Homotrimer. Mg(2+) is required as a cofactor.

Its subcellular location is the cytoplasm. The catalysed reaction is alpha-D-glucosamine 1-phosphate + acetyl-CoA = N-acetyl-alpha-D-glucosamine 1-phosphate + CoA + H(+). It catalyses the reaction N-acetyl-alpha-D-glucosamine 1-phosphate + UTP + H(+) = UDP-N-acetyl-alpha-D-glucosamine + diphosphate. It participates in nucleotide-sugar biosynthesis; UDP-N-acetyl-alpha-D-glucosamine biosynthesis; N-acetyl-alpha-D-glucosamine 1-phosphate from alpha-D-glucosamine 6-phosphate (route II): step 2/2. Its pathway is nucleotide-sugar biosynthesis; UDP-N-acetyl-alpha-D-glucosamine biosynthesis; UDP-N-acetyl-alpha-D-glucosamine from N-acetyl-alpha-D-glucosamine 1-phosphate: step 1/1. The protein operates within bacterial outer membrane biogenesis; LPS lipid A biosynthesis. In terms of biological role, catalyzes the last two sequential reactions in the de novo biosynthetic pathway for UDP-N-acetylglucosamine (UDP-GlcNAc). The C-terminal domain catalyzes the transfer of acetyl group from acetyl coenzyme A to glucosamine-1-phosphate (GlcN-1-P) to produce N-acetylglucosamine-1-phosphate (GlcNAc-1-P), which is converted into UDP-GlcNAc by the transfer of uridine 5-monophosphate (from uridine 5-triphosphate), a reaction catalyzed by the N-terminal domain. The chain is Bifunctional protein GlmU from Clostridium botulinum (strain ATCC 19397 / Type A).